An 85-amino-acid polypeptide reads, in one-letter code: Small ribosomal subunit protein uS17 (85 aa).

This sequence belongs to the universal ribosomal protein uS17 family. In terms of assembly, part of the 30S ribosomal subunit.

Its function is as follows. One of the primary rRNA binding proteins, it binds specifically to the 5'-end of 16S ribosomal RNA. This is Small ribosomal subunit protein uS17 from Mesoplasma florum (strain ATCC 33453 / NBRC 100688 / NCTC 11704 / L1) (Acholeplasma florum).